A 175-amino-acid chain; its full sequence is General stress protein 14 (175 aa).

Belongs to the NAD(P)H dehydrogenase (quinone) family.

The sequence is that of General stress protein 14 (ywrO) from Bacillus subtilis (strain 168).